We begin with the raw amino-acid sequence, 165 residues long: 3-isopropylmalate dehydratase small subunit (165 aa).

It belongs to the LeuD family. LeuD type 2 subfamily. As to quaternary structure, heterodimer of LeuC and LeuD.

The enzyme catalyses (2R,3S)-3-isopropylmalate = (2S)-2-isopropylmalate. The protein operates within amino-acid biosynthesis; L-leucine biosynthesis; L-leucine from 3-methyl-2-oxobutanoate: step 2/4. Catalyzes the isomerization between 2-isopropylmalate and 3-isopropylmalate, via the formation of 2-isopropylmaleate. This chain is 3-isopropylmalate dehydratase small subunit, found in Lachnoclostridium phytofermentans (strain ATCC 700394 / DSM 18823 / ISDg) (Clostridium phytofermentans).